The sequence spans 222 residues: Triosephosphate isomerase (222 aa).

9–11 contributes to the substrate binding site; that stretch reads NFK. His93 functions as the Electrophile in the catalytic mechanism. Glu141 acts as the Proton acceptor in catalysis. Substrate is bound by residues Ile146, Gly181, and 202–203; that span reads AS.

It belongs to the triosephosphate isomerase family. In terms of assembly, homotetramer; dimer of dimers.

It is found in the cytoplasm. It carries out the reaction D-glyceraldehyde 3-phosphate = dihydroxyacetone phosphate. It participates in carbohydrate biosynthesis; gluconeogenesis. It functions in the pathway carbohydrate degradation; glycolysis; D-glyceraldehyde 3-phosphate from glycerone phosphate: step 1/1. Its function is as follows. Involved in the gluconeogenesis. Catalyzes stereospecifically the conversion of dihydroxyacetone phosphate (DHAP) to D-glyceraldehyde-3-phosphate (G3P). The sequence is that of Triosephosphate isomerase from Methanothermus fervidus (strain ATCC 43054 / DSM 2088 / JCM 10308 / V24 S).